The primary structure comprises 268 residues: tRNA (guanine-N(7)-)-methyltransferase (268 aa).

The disordered stretch occupies residues 1–21 (MMAGAEAPQPQKRYYRQRAHS). Ser-21 is subject to Phosphoserine. 6 residues coordinate S-adenosyl-L-methionine: Gly-78, Glu-101, Arg-103, Asn-134, Ala-135, and Leu-154. Asp-157 is a catalytic residue. The interval 158–166 (PHFKRTKHK) is alphaC helix. S-adenosyl-L-methionine-binding residues include Thr-232 and Glu-234. The interval 232–240 (TEEGKKVLR) is alpha6 helix.

This sequence belongs to the class I-like SAM-binding methyltransferase superfamily. TrmB family. As to quaternary structure, catalytic component of the METTL1-WDR4 complex, composed of METTL1 and WDR4. Post-translationally, phosphorylation at Ser-21 by PKB/AKT1 inactivates its methyltransferase activity via a steric interference mechanism in the active site that locally disrupts the catalytic center. Phosphorylation at Ser-21 does not affect the interaction with WDR4.

Its subcellular location is the nucleus. It carries out the reaction guanosine(46) in tRNA + S-adenosyl-L-methionine = N(7)-methylguanosine(46) in tRNA + S-adenosyl-L-homocysteine. The catalysed reaction is a guanosine in mRNA + S-adenosyl-L-methionine = an N(7)-methylguanosine in mRNA + S-adenosyl-L-homocysteine. The enzyme catalyses a guanosine in miRNA + S-adenosyl-L-methionine = an N(7)-methylguanosine in miRNA + S-adenosyl-L-homocysteine. The protein operates within tRNA modification; N(7)-methylguanine-tRNA biosynthesis. Functionally, catalytic component of METTL1-WDR4 methyltransferase complex that mediates the formation of N(7)-methylguanine in a subset of RNA species, such as tRNAs, mRNAs and microRNAs (miRNAs). Catalyzes the formation of N(7)-methylguanine at position 46 (m7G46) in a large subset of tRNAs that contain the 5'-RAGGU-3' motif within the variable loop. M7G46 interacts with C13-G22 in the D-loop to stabilize tRNA tertiary structure and protect tRNAs from decay. Also acts as a methyltransferase for a subset of internal N(7)-methylguanine in mRNAs. Internal N(7)-methylguanine methylation of mRNAs in response to stress promotes their relocalization to stress granules, thereby suppressing their translation. Also methylates a specific subset of miRNAs, such as let-7. N(7)-methylguanine methylation of let-7 miRNA promotes let-7 miRNA processing by disrupting an inhibitory secondary structure within the primary miRNA transcript (pri-miRNA). Acts as a regulator of embryonic stem cell self-renewal and differentiation. The chain is tRNA (guanine-N(7)-)-methyltransferase from Mus musculus (Mouse).